We begin with the raw amino-acid sequence, 246 residues long: uncharacterized protein (246 aa).

Composition is skewed to basic residues over residues Met1–Gly10 and Thr79–Arg97. Residues Met1–Leu184 form a disordered region. Pro residues predominate over residues Pro158–Val180.

This is an uncharacterized protein from Homo sapiens (Human).